A 71-amino-acid polypeptide reads, in one-letter code: Small ribosomal subunit protein bS21 (71 aa).

Belongs to the bacterial ribosomal protein bS21 family.

In Thioalkalivibrio sulfidiphilus (strain HL-EbGR7), this protein is Small ribosomal subunit protein bS21.